We begin with the raw amino-acid sequence, 150 residues long: Large ribosomal subunit protein uL13 (150 aa).

The segment at 130 to 150 (EHPHSAQNPQVLSITTNELVK) is disordered. Residues 134-150 (SAQNPQVLSITTNELVK) show a composition bias toward polar residues.

Belongs to the universal ribosomal protein uL13 family. As to quaternary structure, part of the 50S ribosomal subunit.

Functionally, this protein is one of the early assembly proteins of the 50S ribosomal subunit, although it is not seen to bind rRNA by itself. It is important during the early stages of 50S assembly. The sequence is that of Large ribosomal subunit protein uL13 from Prochlorococcus marinus (strain SARG / CCMP1375 / SS120).